A 328-amino-acid chain; its full sequence is MEAMGEWSTGLGGIYTEEADFMNQLLASYEQPCGGSSSETTATLTAYHHQGSQWNGGFCFSQESSSYSGYCAAMPRQEEDNNGMEDATINTNLYLVGEETSECDATEYSGKSLLPLETVAENHDHSMLQPENSLTTTTDEKMFNQCESSKKRTRATTTDKNKRANKARRSQKCVEMSGENENSGEEEYTEKAAGKRKTKPLKPQKTCCSDDESNGGDTFLSKEDGEDSKALNLNGKTRASRGAATDPQSLYARKRRERINERLRILQHLVPNGTKVDISTMLEEAVQYVKFLQLQIKLLSSDDLWMYAPIAYNGMDIGLDLKLNALTR.

The tract at residues 145–248 (QCESSKKRTR…ASRGAATDPQ (104 aa)) is disordered. Over residues 220–229 (LSKEDGEDSK) the composition is skewed to basic and acidic residues. Residues 243–292 (AATDPQSLYARKRRERINERLRILQHLVPNGTKVDISTMLEEAVQYVKFL) enclose the bHLH domain.

This sequence belongs to the bHLH protein family. In terms of assembly, homodimer.

Its subcellular location is the nucleus. The polypeptide is Transcription factor bHLH84 (BHLH84) (Arabidopsis thaliana (Mouse-ear cress)).